The following is a 93-amino-acid chain: UPF0358 protein BLi01701/BL02974 (93 aa).

It belongs to the UPF0358 family.

The protein is UPF0358 protein BLi01701/BL02974 of Bacillus licheniformis (strain ATCC 14580 / DSM 13 / JCM 2505 / CCUG 7422 / NBRC 12200 / NCIMB 9375 / NCTC 10341 / NRRL NRS-1264 / Gibson 46).